The chain runs to 364 residues: uncharacterized protein (364 aa).

A run of 3 helical transmembrane segments spans residues 41 to 61 (NIFT…FFGL), 298 to 318 (VIYI…ITYM), and 329 to 349 (LLFY…SIII).

It is found in the membrane. This is an uncharacterized protein from Mycoplasma capricolum subsp. capricolum (strain California kid / ATCC 27343 / NCTC 10154).